A 194-amino-acid chain; its full sequence is Imidazoleglycerol-phosphate dehydratase (194 aa).

Belongs to the imidazoleglycerol-phosphate dehydratase family.

Its subcellular location is the cytoplasm. It carries out the reaction D-erythro-1-(imidazol-4-yl)glycerol 3-phosphate = 3-(imidazol-4-yl)-2-oxopropyl phosphate + H2O. The protein operates within amino-acid biosynthesis; L-histidine biosynthesis; L-histidine from 5-phospho-alpha-D-ribose 1-diphosphate: step 6/9. This is Imidazoleglycerol-phosphate dehydratase from Caldicellulosiruptor saccharolyticus (strain ATCC 43494 / DSM 8903 / Tp8T 6331).